Here is a 186-residue protein sequence, read N- to C-terminus: Auxin-responsive protein IAA4 (186 aa).

The EAR-like (transcriptional repression) signature appears at 18–22 (LRLGL). Positions 25–62 (TEETVSCGKSNKRVLPEATEKEIESTGKTETASPPKAQ) are disordered. Residues 38-51 (VLPEATEKEIESTG) show a composition bias toward basic and acidic residues. One can recognise a PB1 domain in the interval 88-175 (GNYVKVSMDG…SCKRLRIMKG (88 aa)).

The protein belongs to the Aux/IAA family. Homodimers and heterodimers. Interacts with TPL. Preferentially expressed in stems, leaves and flowers.

It is found in the nucleus. Aux/IAA proteins are short-lived transcriptional factors that function as repressors of early auxin response genes at low auxin concentrations. Repression is thought to result from the interaction with auxin response factors (ARFs), proteins that bind to the auxin-responsive promoter element (AuxRE). Formation of heterodimers with ARF proteins may alter their ability to modulate early auxin response genes expression. In Arabidopsis thaliana (Mouse-ear cress), this protein is Auxin-responsive protein IAA4 (IAA4).